The following is an 819-amino-acid chain: Nonribosomal peptide synthetase 9 (819 aa).

Residues Leu202 to Arg591 are adenylation (A) domain. A Carrier domain is found at Gln722–Ser798. Ser759 carries the post-translational modification O-(pantetheine 4'-phosphoryl)serine.

The protein belongs to the NRP synthetase family.

The protein operates within secondary metabolite biosynthesis. Functionally, nonribosomal peptide synthetase; part of the Fg3_54/C64 gene cluster that mediates the biosynthesis of the octapeptide fusaoctaxin A, a virulence factor that is required for cell-to-cell invasiveness of plant host. The 2 nonribosomal peptide synthetases NRPS9 and NRPS5 form an assembly line which likely utilizes GABA as a starter unit (loaded on the unique module M1 of NRPS9) and sequentially incorporates seven extender units composed of the residues L-Ala, L-allo-Ile, L-Ser, L-Val, L-Ser, L-Leu and L-Leu, respectively. During the process, each of the residues that are tethered on modules M3-M7 of NRPS5 containing an E domain can undergo an epimerization reaction to produce a D-configuration before the transpeptidation reaction occurs. The elongation of the peptidyl chain might be terminated by module M8-mediated L-Leu incorporation, followed by R domain-catalyzed 4 electron reduction to release the resulting octapeptide from the assembly line as an alcohol. Fusaoctaxin A is cleaved by the cluster specific ABC transporter FGM5 to the pentapeptide fusapentaxin A and the tripeptide fusatrixin A. The other enzymes from the cluster, FGM1, FGM2, FGM3 and FGM9 seem not to be involved in the biosynthesis of fusaoctaxin A and their functions have still to be determined. In Gibberella zeae (strain ATCC MYA-4620 / CBS 123657 / FGSC 9075 / NRRL 31084 / PH-1) (Wheat head blight fungus), this protein is Nonribosomal peptide synthetase 9.